The sequence spans 320 residues: GTP 3',8-cyclase (320 aa).

The Radical SAM core domain maps to 5–222 (KLSRPLKVLR…LMKKEFTFYP (218 aa)). Residue R14 coordinates GTP. 3 residues coordinate [4Fe-4S] cluster: C21, C25, and C28. R65 contributes to the GTP binding site. Residue G69 coordinates S-adenosyl-L-methionine. T96 provides a ligand contact to GTP. S120 is an S-adenosyl-L-methionine binding site. K157 is a binding site for GTP. Position 191 (M191) interacts with S-adenosyl-L-methionine. Residues C253 and C256 each coordinate [4Fe-4S] cluster. 258-260 (RIR) is a GTP binding site. C270 contributes to the [4Fe-4S] cluster binding site.

This sequence belongs to the radical SAM superfamily. MoaA family. As to quaternary structure, monomer and homodimer. [4Fe-4S] cluster serves as cofactor.

The enzyme catalyses GTP + AH2 + S-adenosyl-L-methionine = (8S)-3',8-cyclo-7,8-dihydroguanosine 5'-triphosphate + 5'-deoxyadenosine + L-methionine + A + H(+). It participates in cofactor biosynthesis; molybdopterin biosynthesis. Its function is as follows. Catalyzes the cyclization of GTP to (8S)-3',8-cyclo-7,8-dihydroguanosine 5'-triphosphate. This chain is GTP 3',8-cyclase, found in Aquifex aeolicus (strain VF5).